A 397-amino-acid chain; its full sequence is Digeranylgeranylglycerophospholipid reductase 1 (397 aa).

Positions 18, 37, 48, 49, 51, 104, 128, 284, 296, and 297 each coordinate FAD.

It belongs to the geranylgeranyl reductase family. DGGGPL reductase subfamily. The cofactor is FAD.

It catalyses the reaction a 2,3-bis-O-phytanyl-sn-glycerol 1-phospholipid + 8 A = a 2,3-bis-O-(geranylgeranyl)-sn-glycerol 1-phospholipid + 8 AH2. It carries out the reaction 2,3-bis-O-(phytanyl)-sn-glycerol 1-phosphate + 8 A = 2,3-bis-O-(geranylgeranyl)-sn-glycerol 1-phosphate + 8 AH2. The enzyme catalyses CDP-2,3-bis-O-(geranylgeranyl)-sn-glycerol + 8 AH2 = CDP-2,3-bis-O-(phytanyl)-sn-glycerol + 8 A. The catalysed reaction is archaetidylserine + 8 AH2 = 2,3-bis-O-phytanyl-sn-glycero-3-phospho-L-serine + 8 A. Its pathway is membrane lipid metabolism; glycerophospholipid metabolism. Its function is as follows. Is involved in the reduction of 2,3-digeranylgeranylglycerophospholipids (unsaturated archaeols) into 2,3-diphytanylglycerophospholipids (saturated archaeols) in the biosynthesis of archaeal membrane lipids. Catalyzes the formation of archaetidic acid (2,3-di-O-phytanyl-sn-glyceryl phosphate) from 2,3-di-O-geranylgeranylglyceryl phosphate (DGGGP) via the hydrogenation of each double bond of the isoprenoid chains. Is also probably able to reduce double bonds of geranyl groups in CDP-2,3-bis-O-(geranylgeranyl)-sn-glycerol and archaetidylserine, thus acting at various stages in the biosynthesis of archaeal membrane lipids. This Methanothermobacter thermautotrophicus (strain ATCC 29096 / DSM 1053 / JCM 10044 / NBRC 100330 / Delta H) (Methanobacterium thermoautotrophicum) protein is Digeranylgeranylglycerophospholipid reductase 1.